A 636-amino-acid polypeptide reads, in one-letter code: MPVITLPDGSQRSFEQAVSVMDVALDIGPGLAKATIAGRIDGNLVDACELITQDASLQLITSKDSEGLEIIRHSCAHLLGHAIKQLYPNVKMAIGPTIENGFYYDIDLDESISEDDLVKLEKRMTELARTGYEVVKKTGSWQDAYDAFTERGETYKLAILDENIEKTDTPALYHHQEYIDMCRGPHVPSMRHCHHFKLMKVAGAYWRGDSDNKMLQRIYGTAWADKKQLKAYIVRLAEAEKRDHRKIGKTLDLFHWQEEAPGMVFWHNDGWTIYTELEKFIREKLHEYDYDEVKAPMMMDRSLWEKSGHWDKYADGMFTTTSEKREYAIKPMNCPGHVQIFNQGLKSYRDLPLRIAEFGCCHRNEPSGSLHGLMRVRGFTQDDAHIFCMESQVQAEVKKCIEMVYDVYGSFGFEDVVVKLSTRPDNRIGSDEIWDKAEAGLAQALTDSNIAFEYLPGEGAFYGPKIEFTLMDCLGRAWQCGTVQLDFALPERLGATYVGEDNERYTPVMIHRAILGSLERFIGILIEEFTGKFPTWLSPIQTTIMNITDKQAPYCEKVVKKLKENGFRAKIDLRNEKIGFKIREHTLKRVPYLLVVGDKEMESGEISVRTRSGEDLGKMSVDDFIAKLSDEVKSRQ.

In terms of domain architecture, TGS spans 1–61 (MPVITLPDGS…TQDASLQLIT (61 aa)). The catalytic stretch occupies residues 243 to 534 (DHRKIGKTLD…LIEEFTGKFP (292 aa)). Zn(2+) contacts are provided by cysteine 334, histidine 385, and histidine 511.

Belongs to the class-II aminoacyl-tRNA synthetase family. As to quaternary structure, homodimer. The cofactor is Zn(2+).

It localises to the cytoplasm. It carries out the reaction tRNA(Thr) + L-threonine + ATP = L-threonyl-tRNA(Thr) + AMP + diphosphate + H(+). Its function is as follows. Catalyzes the attachment of threonine to tRNA(Thr) in a two-step reaction: L-threonine is first activated by ATP to form Thr-AMP and then transferred to the acceptor end of tRNA(Thr). Also edits incorrectly charged L-seryl-tRNA(Thr). This chain is Threonine--tRNA ligase, found in Colwellia psychrerythraea (strain 34H / ATCC BAA-681) (Vibrio psychroerythus).